Reading from the N-terminus, the 325-residue chain is Acetyl-coenzyme A carboxylase carboxyl transferase subunit alpha (325 aa).

Positions Arg38 to Thr292 constitute a CoA carboxyltransferase C-terminal domain.

It belongs to the AccA family. As to quaternary structure, acetyl-CoA carboxylase is a heterohexamer composed of biotin carboxyl carrier protein (AccB), biotin carboxylase (AccC) and two subunits each of ACCase subunit alpha (AccA) and ACCase subunit beta (AccD).

Its subcellular location is the cytoplasm. It catalyses the reaction N(6)-carboxybiotinyl-L-lysyl-[protein] + acetyl-CoA = N(6)-biotinyl-L-lysyl-[protein] + malonyl-CoA. Its pathway is lipid metabolism; malonyl-CoA biosynthesis; malonyl-CoA from acetyl-CoA: step 1/1. Inhibited by pyrrolidine dione antibiotics moiramide B (CPD1) and CPD2. Its function is as follows. Component of the acetyl coenzyme A carboxylase (ACC) complex. First, biotin carboxylase catalyzes the carboxylation of biotin on its carrier protein (BCCP) and then the CO(2) group is transferred by the carboxyltransferase to acetyl-CoA to form malonyl-CoA. This is Acetyl-coenzyme A carboxylase carboxyl transferase subunit alpha from Bacillus subtilis (strain 168).